We begin with the raw amino-acid sequence, 324 residues long: Elongation factor P--(R)-beta-lysine ligase (324 aa).

75 to 77 contributes to the substrate binding site; that stretch reads SPE. Residues 99–101 and asparagine 108 each bind ATP; that span reads RNE. Tyrosine 117 serves as a coordination point for substrate. 243–244 lines the ATP pocket; the sequence is EL. Substrate is bound at residue glutamate 250. ATP is bound at residue glycine 299.

Belongs to the class-II aminoacyl-tRNA synthetase family. EpmA subfamily. Homodimer.

The enzyme catalyses D-beta-lysine + L-lysyl-[protein] + ATP = N(6)-((3R)-3,6-diaminohexanoyl)-L-lysyl-[protein] + AMP + diphosphate + H(+). In terms of biological role, with EpmB is involved in the beta-lysylation step of the post-translational modification of translation elongation factor P (EF-P). Catalyzes the ATP-dependent activation of (R)-beta-lysine produced by EpmB, forming a lysyl-adenylate, from which the beta-lysyl moiety is then transferred to the epsilon-amino group of a conserved specific lysine residue in EF-P. The chain is Elongation factor P--(R)-beta-lysine ligase from Vibrio cholerae serotype O1 (strain ATCC 39315 / El Tor Inaba N16961).